The primary structure comprises 121 residues: Small ribosomal subunit protein uS13 (121 aa).

The tract at residues 91–121 (HRRGLPVRGQNTKNNARTRKGKKASMAGKKK) is disordered. Basic residues predominate over residues 106–121 (ARTRKGKKASMAGKKK).

This sequence belongs to the universal ribosomal protein uS13 family. Part of the 30S ribosomal subunit. Forms a loose heterodimer with protein S19. Forms two bridges to the 50S subunit in the 70S ribosome.

Its function is as follows. Located at the top of the head of the 30S subunit, it contacts several helices of the 16S rRNA. In the 70S ribosome it contacts the 23S rRNA (bridge B1a) and protein L5 of the 50S subunit (bridge B1b), connecting the 2 subunits; these bridges are implicated in subunit movement. Contacts the tRNAs in the A and P-sites. The polypeptide is Small ribosomal subunit protein uS13 (Lacticaseibacillus paracasei (strain ATCC 334 / BCRC 17002 / CCUG 31169 / CIP 107868 / KCTC 3260 / NRRL B-441) (Lactobacillus paracasei)).